The primary structure comprises 248 residues: MTETARTTIDASEIEHFSRIAAEWWNPQGKFRPLHKFNPTRLAYIKEKICAKFNRDPNAPRPFDGLRLLDIGCGGGLLCEPMARLGATVIGADASTTNIEVAKIHAAQSGLDIDYRATTAEALAEAGEKFDVVLNMEVVEHVADVDLFMSATSEMVKPGGLMFVATINRTLKAYGLAIIGAEYVLRWLPRGTHQYEKLVRPEELEAALAKGGLRLIDKLGVTYNPLADSWSRSRDTDVNYMVLAERPA.

Residues R41, G72, D93, and M136 each contribute to the S-adenosyl-L-methionine site.

It belongs to the methyltransferase superfamily. UbiG/COQ3 family.

The enzyme catalyses a 3-demethylubiquinol + S-adenosyl-L-methionine = a ubiquinol + S-adenosyl-L-homocysteine + H(+). It catalyses the reaction a 3-(all-trans-polyprenyl)benzene-1,2-diol + S-adenosyl-L-methionine = a 2-methoxy-6-(all-trans-polyprenyl)phenol + S-adenosyl-L-homocysteine + H(+). It participates in cofactor biosynthesis; ubiquinone biosynthesis. In terms of biological role, O-methyltransferase that catalyzes the 2 O-methylation steps in the ubiquinone biosynthetic pathway. This chain is Ubiquinone biosynthesis O-methyltransferase, found in Brucella anthropi (strain ATCC 49188 / DSM 6882 / CCUG 24695 / JCM 21032 / LMG 3331 / NBRC 15819 / NCTC 12168 / Alc 37) (Ochrobactrum anthropi).